The chain runs to 416 residues: NADH-quinone oxidoreductase subunit H (416 aa).

9 helical membrane passes run 16–36 (LILA…LAAI), 84–104 (PVYL…FAVI), 124–144 (LAVA…GIVL), 165–185 (VVSY…YAGT), 197–217 (STWY…SMVG), 260–280 (VSAL…PISL), 288–308 (WWPL…YIWL), 320–340 (FMAI…MIVA), and 353–373 (WASG…VVLW).

Belongs to the complex I subunit 1 family. NDH-1 is composed of 14 different subunits. Subunits NuoA, H, J, K, L, M, N constitute the membrane sector of the complex.

It localises to the cell membrane. It carries out the reaction a quinone + NADH + 5 H(+)(in) = a quinol + NAD(+) + 4 H(+)(out). Functionally, NDH-1 shuttles electrons from NADH, via FMN and iron-sulfur (Fe-S) centers, to quinones in the respiratory chain. The immediate electron acceptor for the enzyme in this species is believed to be menaquinone. Couples the redox reaction to proton translocation (for every two electrons transferred, four hydrogen ions are translocated across the cytoplasmic membrane), and thus conserves the redox energy in a proton gradient. This subunit may bind ubiquinone. This chain is NADH-quinone oxidoreductase subunit H, found in Mycobacterium sp. (strain JLS).